Here is a 269-residue protein sequence, read N- to C-terminus: Regulating synaptic membrane exocytosis protein 4 (269 aa).

Residues 115–233 form the C2 domain; the sequence is PMGDVEIGLQ…DLTTLAVGWY (119 aa). 2 positions are modified to phosphoserine: Ser254 and Ser257.

Binds PPFIA3. Does not bind RAB3.

It localises to the synapse. Regulates synaptic membrane exocytosis. The sequence is that of Regulating synaptic membrane exocytosis protein 4 (RIMS4) from Homo sapiens (Human).